A 277-amino-acid polypeptide reads, in one-letter code: Energy-coupling factor transporter ATP-binding protein EcfA1 (277 aa).

Residues 5–242 (VKVNNISFEY…IKMLKEIGLD (238 aa)) enclose the ABC transporter domain. 41–48 (GHNGSGKS) serves as a coordination point for ATP.

The protein belongs to the ABC transporter superfamily. Energy-coupling factor EcfA family. As to quaternary structure, forms a stable energy-coupling factor (ECF) transporter complex composed of 2 membrane-embedded substrate-binding proteins (S component), 2 ATP-binding proteins (A component) and 2 transmembrane proteins (T component).

Its subcellular location is the cell membrane. ATP-binding (A) component of a common energy-coupling factor (ECF) ABC-transporter complex. Unlike classic ABC transporters this ECF transporter provides the energy necessary to transport a number of different substrates. The sequence is that of Energy-coupling factor transporter ATP-binding protein EcfA1 from Clostridioides difficile (strain 630) (Peptoclostridium difficile).